Reading from the N-terminus, the 164-residue chain is Thiol peroxidase (164 aa).

The Thioredoxin domain occupies Leu-16–Ile-162. The Cysteine sulfenic acid (-SOH) intermediate role is filled by Cys-58. The cysteines at positions 58 and 92 are disulfide-linked.

It belongs to the peroxiredoxin family. Tpx subfamily. In terms of assembly, homodimer.

It carries out the reaction a hydroperoxide + [thioredoxin]-dithiol = an alcohol + [thioredoxin]-disulfide + H2O. Its function is as follows. Thiol-specific peroxidase that catalyzes the reduction of hydrogen peroxide and organic hydroperoxides to water and alcohols, respectively. Plays a role in cell protection against oxidative stress by detoxifying peroxides. This Streptococcus agalactiae serotype III (strain NEM316) protein is Thiol peroxidase.